A 68-amino-acid polypeptide reads, in one-letter code: Large ribosomal subunit protein uL29 (68 aa).

This sequence belongs to the universal ribosomal protein uL29 family.

This Methanobrevibacter smithii (strain ATCC 35061 / DSM 861 / OCM 144 / PS) protein is Large ribosomal subunit protein uL29.